We begin with the raw amino-acid sequence, 302 residues long: Beta-1,2-mannobiose phosphorylase (302 aa).

The protein belongs to the glycosyl hydrolase 130 family. As to quaternary structure, monomer.

The catalysed reaction is beta-D-mannopyranosyl-(1-&gt;2)-D-mannopyranose + phosphate = alpha-D-mannose 1-phosphate + D-mannose. Its pathway is nucleotide-sugar biosynthesis; GDP-alpha-D-mannose biosynthesis. Probably involved in a salvage pathway for GDP-D-mannose biosynthesis. Catalyzes the reversible phosphorolysis of 1,2-beta-oligomannan. In phosphorolytic reactions, prefers beta-1,2-mannobiose (beta-1,2-Man2) as substrate. Produces alpha-D-mannose 1-phosphate, which is the precursor of GDP-D-mannose. The chain is Beta-1,2-mannobiose phosphorylase from Thermoanaerobacter sp. (strain X514).